Consider the following 208-residue polypeptide: Large ribosomal subunit protein bL25 (208 aa).

Residues 163–208 form a disordered region; it reads DYSYNHEPDEVVASILPPQKQEETEAESAAQDVEEPEKGTEEEKEE. Residues 198 to 208 show a composition bias toward basic and acidic residues; sequence PEKGTEEEKEE.

This sequence belongs to the bacterial ribosomal protein bL25 family. CTC subfamily. As to quaternary structure, part of the 50S ribosomal subunit; part of the 5S rRNA/L5/L18/L25 subcomplex. Contacts the 5S rRNA. Binds to the 5S rRNA independently of L5 and L18.

Functionally, this is one of the proteins that binds to the 5S RNA in the ribosome where it forms part of the central protuberance. This chain is Large ribosomal subunit protein bL25, found in Bacillus licheniformis (strain ATCC 14580 / DSM 13 / JCM 2505 / CCUG 7422 / NBRC 12200 / NCIMB 9375 / NCTC 10341 / NRRL NRS-1264 / Gibson 46).